Consider the following 334-residue polypeptide: E3 ubiquitin-protein ligase CIP8 (334 aa).

Residues 111 to 158 (LNSRNEIDDDEDEDEDDGDEEEEDEEENLTVNDEEDEEDDLRRRNRFP) form a disordered region. Residues 117-149 (IDDDEDEDEDDGDEEEEDEEENLTVNDEEDEED) show a composition bias toward acidic residues. The segment at 257–298 (CAVCKDGMVMGETGKKLPCGHCYHGDCIVPWLGTRNSCPVCR) adopts an RING-type; atypical zinc-finger fold. The interval 307-334 (EYEEERKKRTSTVSDSAAASSSSSTSRY) is disordered. A compositionally biased stretch (low complexity) spans 317–334 (STVSDSAAASSSSSTSRY).

In terms of assembly, interacts with the RING finger of COP1. Interacts with UBC8 through its N-terminal region. Expressed in both light- and dark-grown seedlings.

It localises to the cytoplasm. The catalysed reaction is S-ubiquitinyl-[E2 ubiquitin-conjugating enzyme]-L-cysteine + [acceptor protein]-L-lysine = [E2 ubiquitin-conjugating enzyme]-L-cysteine + N(6)-ubiquitinyl-[acceptor protein]-L-lysine.. It functions in the pathway protein modification; protein ubiquitination. Its function is as follows. E3 ubiquitin-protein ligase that mediates ubiquitination and subsequent proteasomal degradation of target proteins. Probably forms a minimal ubiquitin ligase complex in cooperation with the E2 enzyme UBC8. Its interaction with COP1 suggests that it may participate in proteasome-mediated degradation of HY5 in vivo. In Arabidopsis thaliana (Mouse-ear cress), this protein is E3 ubiquitin-protein ligase CIP8 (CIP8).